The chain runs to 320 residues: Zinc finger Ran-binding domain-containing protein 2 (320 aa).

Phosphoserine is present on Ser9. Residues 9 to 40 (SDGDWICPDKKCGNVNFARRTSCNRCGREKTT) form a RanBP2-type 1 zinc finger. An N6-acetyllysine mark is found at Lys18, Lys54, and Lys92. The segment at 65-94 (SANDWQCKTCSNVNWARRSECNMCNTPKYA) adopts a RanBP2-type 2 zinc-finger fold. Positions 117–320 (REESDGEYDE…QVIGENTKQP (204 aa)) are disordered. A phosphoserine mark is found at Ser120, Ser153, Ser181, Ser188, and Ser193. The segment covering 150–163 (DKESEGEEEDEDED) has biased composition (acidic residues). Residues 151-320 (KESEGEEEDE…QVIGENTKQP (170 aa)) form a required for nuclear targeting region. The span at 196–210 (KKSNRRSRSKSRSSH) shows a compositional bias: basic residues. Low complexity-rich tracts occupy residues 211–224 (SRSS…SSSR) and 232–242 (RSSSSSQSRSR). Residues 251 to 273 (SRGSKSRSSSRSHRGSSSPRKRS) are compositionally biased toward basic residues.

It belongs to the ZRANB2 family. Interacts with the C-terminal half of SNRP70/U1-70K, the Arg/Ser-rich domain of AKAP17A as well as with U2AF1 and CLK1. In terms of processing, phosphorylated on Ser-310 upon DNA damage, probably by ATM or ATR.

The protein localises to the nucleus. Splice factor required for alternative splicing of TRA2B/SFRS10 transcripts. Binds to ssRNA containing the consensus sequence 5'-AGGUAA-3'. May interfere with constitutive 5'-splice site selection. The sequence is that of Zinc finger Ran-binding domain-containing protein 2 from Pongo abelii (Sumatran orangutan).